A 218-amino-acid polypeptide reads, in one-letter code: ATP phosphoribosyltransferase (218 aa).

It belongs to the ATP phosphoribosyltransferase family. Short subfamily. In terms of assembly, heteromultimer composed of HisG and HisZ subunits.

It localises to the cytoplasm. The enzyme catalyses 1-(5-phospho-beta-D-ribosyl)-ATP + diphosphate = 5-phospho-alpha-D-ribose 1-diphosphate + ATP. The protein operates within amino-acid biosynthesis; L-histidine biosynthesis; L-histidine from 5-phospho-alpha-D-ribose 1-diphosphate: step 1/9. Catalyzes the condensation of ATP and 5-phosphoribose 1-diphosphate to form N'-(5'-phosphoribosyl)-ATP (PR-ATP). Has a crucial role in the pathway because the rate of histidine biosynthesis seems to be controlled primarily by regulation of HisG enzymatic activity. The protein is ATP phosphoribosyltransferase of Lactiplantibacillus plantarum (strain ATCC BAA-793 / NCIMB 8826 / WCFS1) (Lactobacillus plantarum).